The chain runs to 842 residues: Elongation factor 2 (842 aa).

Positions Ser-17–Lys-253 constitute a tr-type G domain. GTP is bound by residues Ala-26 to Ser-33, Asp-104 to His-108, and Asn-158 to Asp-161. A Phosphoserine modification is found at Ser-568. Position 574 is a phosphothreonine (Thr-574). A Diphthamide modification is found at His-699.

Belongs to the TRAFAC class translation factor GTPase superfamily. Classic translation factor GTPase family. EF-G/EF-2 subfamily.

It is found in the cytoplasm. In terms of biological role, catalyzes the GTP-dependent ribosomal translocation step during translation elongation. During this step, the ribosome changes from the pre-translocational (PRE) to the post-translocational (POST) state as the newly formed A-site-bound peptidyl-tRNA and P-site-bound deacylated tRNA move to the P and E sites, respectively. Catalyzes the coordinated movement of the two tRNA molecules, the mRNA and conformational changes in the ribosome. In Schizosaccharomyces pombe (strain 972 / ATCC 24843) (Fission yeast), this protein is Elongation factor 2 (eft201).